Here is a 458-residue protein sequence, read N- to C-terminus: UDP-N-acetylmuramate--L-alanine ligase (458 aa).

118–124 (GTHGKTT) contributes to the ATP binding site.

Belongs to the MurCDEF family.

The protein localises to the cytoplasm. It catalyses the reaction UDP-N-acetyl-alpha-D-muramate + L-alanine + ATP = UDP-N-acetyl-alpha-D-muramoyl-L-alanine + ADP + phosphate + H(+). The protein operates within cell wall biogenesis; peptidoglycan biosynthesis. Functionally, cell wall formation. This chain is UDP-N-acetylmuramate--L-alanine ligase, found in Clostridium botulinum (strain Loch Maree / Type A3).